A 473-amino-acid chain; its full sequence is Anthocyanidin 5,3-O-glucosyltransferase (473 aa).

It belongs to the UDP-glycosyltransferase family.

Its pathway is pigment biosynthesis; anthocyanin biosynthesis. Its function is as follows. Sequentially catalyzes two glycosylation steps at the 5-OH and 3-OH positions of anthocyanidin. Unglycosylated anthocyanidin or anthocyanidin 5-O-glucoside, but not anthocyanidin 3-O-glucoside, can be used as glucosyl acceptor. This Rosa hybrid cultivar protein is Anthocyanidin 5,3-O-glucosyltransferase (RhGT1).